The following is a 230-amino-acid chain: Ribosomal RNA small subunit methyltransferase G (230 aa).

S-adenosyl-L-methionine is bound by residues Gly95, Phe100, 146 to 147 (GE), and Arg159.

The protein belongs to the methyltransferase superfamily. RNA methyltransferase RsmG family.

The protein localises to the cytoplasm. Specifically methylates the N7 position of a guanine in 16S rRNA. This Parabacteroides distasonis (strain ATCC 8503 / DSM 20701 / CIP 104284 / JCM 5825 / NCTC 11152) protein is Ribosomal RNA small subunit methyltransferase G.